A 468-amino-acid polypeptide reads, in one-letter code: Spliceosome-associated protein CWC27 homolog (468 aa).

The residue at position 2 (serine 2) is an N-acetylserine. In terms of domain architecture, PPIase cyclophilin-type spans 11–166; it reads TNGKVLLKTT…NPHRIKSCEV (156 aa). 2 disordered regions span residues 204–382 and 427–468; these read LLSF…EDQT and RKVK…KERR. Residues 206–229 adopt a coiled-coil conformation; that stretch reads SFGEEAEEEEEEVNRVSQSMKGRS. Residues 231–241 show a composition bias toward basic and acidic residues; sequence SSHDLLKDDPH. A compositionally biased stretch (acidic residues) spans 256–268; the sequence is TGDLEDDAEDDSV. Basic and acidic residues-rich tracts occupy residues 269–287 and 302–342; these read EHDG…ERIA and GDGE…AEKG. Position 273 is a phosphoserine (serine 273). Residues 309 to 342 adopt a coiled-coil conformation; the sequence is ASRSEELRKEARQLKRELLAAKQKKESATKAEKG. Serine 343 carries the post-translational modification Phosphoserine. 2 stretches are compositionally biased toward basic and acidic residues: residues 356–368 and 453–468; these read EYRR…EALR and RREE…KERR.

It belongs to the cyclophilin-type PPIase family. Part of the activated spliceosome B/catalytic step 1 spliceosome, one of the forms of the spliceosome which has a well-formed active site but still cannot catalyze the branching reaction and is composed at least of 52 proteins, the U2, U5 and U6 snRNAs and the pre-mRNA. Recruited during early steps of activated spliceosome B maturation, it is probably one of the first proteins released from this complex as he matures to the spliceosome C complex. Component of the minor spliceosome, which splices U12-type introns.

Its subcellular location is the nucleus. Functionally, as part of the spliceosome, plays a role in pre-mRNA splicing. Probable inactive PPIase with no peptidyl-prolyl cis-trans isomerase activity. As a component of the minor spliceosome, involved in the splicing of U12-type introns in pre-mRNAs. The polypeptide is Spliceosome-associated protein CWC27 homolog (Rattus norvegicus (Rat)).